Here is a 198-residue protein sequence, read N- to C-terminus: Na(+)-translocating NADH-quinone reductase subunit E (198 aa).

6 consecutive transmembrane segments (helical) span residues serine 11–valine 31, valine 35–valine 55, phenylalanine 77–phenylalanine 97, glycine 110–valine 130, valine 140–leucine 160, and leucine 176–isoleucine 196.

Belongs to the NqrDE/RnfAE family. In terms of assembly, composed of six subunits; NqrA, NqrB, NqrC, NqrD, NqrE and NqrF.

It is found in the cell inner membrane. It carries out the reaction a ubiquinone + n Na(+)(in) + NADH + H(+) = a ubiquinol + n Na(+)(out) + NAD(+). NQR complex catalyzes the reduction of ubiquinone-1 to ubiquinol by two successive reactions, coupled with the transport of Na(+) ions from the cytoplasm to the periplasm. NqrA to NqrE are probably involved in the second step, the conversion of ubisemiquinone to ubiquinol. This Mannheimia succiniciproducens (strain KCTC 0769BP / MBEL55E) protein is Na(+)-translocating NADH-quinone reductase subunit E.